Here is a 203-residue protein sequence, read N- to C-terminus: Recombination protein RecR (203 aa).

The segment at 56–71 adopts a C4-type zinc-finger fold; that stretch reads CEVCGNVSDADRCRIC. In terms of domain architecture, Toprim spans 79 to 179; that stretch reads SLVCVVEEPK…TVTRIASGLP (101 aa).

Belongs to the RecR family.

Functionally, may play a role in DNA repair. It seems to be involved in an RecBC-independent recombinational process of DNA repair. It may act with RecF and RecO. The sequence is that of Recombination protein RecR from Mycobacterium sp. (strain JLS).